A 341-amino-acid polypeptide reads, in one-letter code: GDP-fucose transporter 1 (341 aa).

Helical transmembrane passes span 17–37, 41–61, 71–91, 103–123, 132–152, 156–176, 187–207, 231–251, 260–280, and 283–303; these read LVIG…LAIT, YPGL…YLLG, FTWD…LAIF, DTFI…DTVF, LTFL…ATDS, LTAY…MVYI, IWGL…VFWF, AFSS…FGFA, AFTV…VLIW, and HATP…VGYQ. Residues 316 to 341 are disordered; that stretch reads SEKDSEKGEEDEELTQLVPGKLASVV.

Belongs to the nucleotide-sugar transporter family. GDP-Mannose:GMP antiporter (GMA) (TC 2.A.7.13) subfamily. Ubiquitous.

The protein resides in the golgi apparatus membrane. Its function is as follows. Acts as the major nucleotide-sugar transporter for the import of GDP-Fucose into the Golgi lumen. Transports GDP-Fucose in a strict counter-exchange mode. Is required for proper plant growth and development. Also acts as a GDP-mannose transporter that may be involved in the import of GDP-mannose from the cytoplasm into the Golgi lumen. The protein is GDP-fucose transporter 1 of Arabidopsis thaliana (Mouse-ear cress).